The chain runs to 413 residues: Multifunctional CCA protein (413 aa).

Residues glycine 8 and arginine 11 each contribute to the ATP site. 2 residues coordinate CTP: glycine 8 and arginine 11. Aspartate 21 and aspartate 23 together coordinate Mg(2+). 3 residues coordinate ATP: arginine 91, arginine 143, and arginine 146. Residues arginine 91, arginine 143, and arginine 146 each coordinate CTP. Residues 232 to 333 (TGVHVMMVVD…VRLFERSDAL (102 aa)) enclose the HD domain.

It belongs to the tRNA nucleotidyltransferase/poly(A) polymerase family. Bacterial CCA-adding enzyme type 1 subfamily. As to quaternary structure, monomer. Can also form homodimers and oligomers. Requires Mg(2+) as cofactor. It depends on Ni(2+) as a cofactor.

It catalyses the reaction a tRNA precursor + 2 CTP + ATP = a tRNA with a 3' CCA end + 3 diphosphate. The catalysed reaction is a tRNA with a 3' CCA end + 2 CTP + ATP = a tRNA with a 3' CCACCA end + 3 diphosphate. Catalyzes the addition and repair of the essential 3'-terminal CCA sequence in tRNAs without using a nucleic acid template. Adds these three nucleotides in the order of C, C, and A to the tRNA nucleotide-73, using CTP and ATP as substrates and producing inorganic pyrophosphate. tRNA 3'-terminal CCA addition is required both for tRNA processing and repair. Also involved in tRNA surveillance by mediating tandem CCA addition to generate a CCACCA at the 3' terminus of unstable tRNAs. While stable tRNAs receive only 3'-terminal CCA, unstable tRNAs are marked with CCACCA and rapidly degraded. This Burkholderia vietnamiensis (strain G4 / LMG 22486) (Burkholderia cepacia (strain R1808)) protein is Multifunctional CCA protein.